The sequence spans 461 residues: GTPase Der (461 aa).

2 EngA-type G domains span residues 9–171 (KTIA…DLNQ) and 200–371 (IQVG…ECFS). Residues 15–22 (GQPNVGKS), 62–66 (DTGGM), 123–126 (NKID), 206–213 (GRVNVGKS), 253–257 (DTAGI), and 317–320 (NKWD) each bind GTP. The KH-like domain maps to 372 to 456 (KRIPTSLLNS…PLILNAKDKK (85 aa)).

This sequence belongs to the TRAFAC class TrmE-Era-EngA-EngB-Septin-like GTPase superfamily. EngA (Der) GTPase family. Associates with the 50S ribosomal subunit.

GTPase that plays an essential role in the late steps of ribosome biogenesis. The polypeptide is GTPase Der (Helicobacter pylori (strain Shi470)).